Consider the following 72-residue polypeptide: Putative beta-neurotoxin (72 aa).

The signal sequence occupies residues 1 to 7; the sequence is IDMVVEC. Positions 9–71 constitute an LCN-type CS-alpha/beta domain; it reads KDGYLMEHDG…TWSRATNRCG (63 aa). Intrachain disulfides connect cysteine 19–cysteine 70, cysteine 23–cysteine 45, cysteine 31–cysteine 51, and cysteine 35–cysteine 53.

In terms of tissue distribution, expressed by the venom gland.

The protein localises to the secreted. Beta toxins bind voltage-independently at site-4 of sodium channels (Nav) and shift the voltage of activation toward more negative potentials thereby affecting sodium channel activation and promoting spontaneous and repetitive firing. The chain is Putative beta-neurotoxin from Tityus pachyurus (Colombian scorpion).